The primary structure comprises 958 residues: Dermatan-sulfate epimerase (958 aa).

The signal sequence occupies residues 1–22; that stretch reads MRTHTRGAPSVFFICLFCFVSA. Residues 23–902 are Lumenal-facing; that stretch reads CVTDENPEVM…APALSASYTR (880 aa). An N-linked (GlcNAc...) asparagine glycan is attached at Asn-183. His-205 serves as the catalytic Proton donor. Tyr-261 is a catalytic residue. 2 N-linked (GlcNAc...) asparagine glycosylation sites follow: Asn-336 and Asn-411. Mn(2+) contacts are provided by His-452 and Glu-470. Tyr-473 is an active-site residue. Asn-481 is a binding site for Mn(2+). Asn-642 and Asn-648 each carry an N-linked (GlcNAc...) asparagine glycan. The chain crosses the membrane as a helical span at residues 903 to 923; sequence LFLILNIAIFFVMLAMQLTYF. Over 924–933 the chain is Cytoplasmic; sequence QRAQSLHGQR. The helical transmembrane segment at 934–954 threads the bilayer; it reads CLYAVLLIDSCILLWLYSSCS. Residues 955–958 lie on the Lumenal side of the membrane; sequence QSQC.

It belongs to the dermatan-sulfate isomerase family. Requires Mn(2+) as cofactor. In terms of processing, N-glycosylated. Glycosylation is important for enzymatic activity.

The protein resides in the endoplasmic reticulum membrane. The protein localises to the golgi apparatus membrane. Its subcellular location is the cytoplasmic vesicle membrane. It localises to the microsome membrane. The catalysed reaction is chondroitin 4'-sulfate = dermatan 4'-sulfate. It functions in the pathway glycan metabolism; chondroitin sulfate biosynthesis. Its pathway is glycan metabolism; heparan sulfate biosynthesis. Its function is as follows. Converts D-glucuronic acid to L-iduronic acid (IdoUA) residues. Plays an important role in the biosynthesis of the glycosaminoglycan/mucopolysaccharide dermatan sulfate. This Bos taurus (Bovine) protein is Dermatan-sulfate epimerase (DSE).